Consider the following 51-residue polypeptide: Photosystem I reaction center subunit IX (51 aa).

The chain crosses the membrane as a helical span at residues 17–37 (FFSTAPVIALVFFTLTAGFLV).

Belongs to the PsaJ family.

Its subcellular location is the cellular thylakoid membrane. Functionally, may help in the organization of the PsaE and PsaF subunits. This is Photosystem I reaction center subunit IX from Acaryochloris marina (strain MBIC 11017).